The following is a 395-amino-acid chain: Probable L-tyrosine/L-aspartate decarboxylase (395 aa).

The residue at position 242 (K242) is an N6-(pyridoxal phosphate)lysine.

It belongs to the group II decarboxylase family. MfnA subfamily. The cofactor is pyridoxal 5'-phosphate.

The catalysed reaction is L-tyrosine + H(+) = tyramine + CO2. The enzyme catalyses L-aspartate + H(+) = beta-alanine + CO2. Its pathway is cofactor biosynthesis; methanofuran biosynthesis. The protein operates within cofactor biosynthesis; coenzyme A biosynthesis. In terms of biological role, catalyzes the decarboxylation of L-tyrosine to produce tyramine for methanofuran biosynthesis. Can also catalyze the decarboxylation of L-aspartate to produce beta-alanine for coenzyme A (CoA) biosynthesis. In Methanosarcina acetivorans (strain ATCC 35395 / DSM 2834 / JCM 12185 / C2A), this protein is Probable L-tyrosine/L-aspartate decarboxylase.